We begin with the raw amino-acid sequence, 226 residues long: Endonuclease NucS (226 aa).

This sequence belongs to the NucS endonuclease family.

It is found in the cytoplasm. Functionally, cleaves both 3' and 5' ssDNA extremities of branched DNA structures. In Mycobacterium tuberculosis (strain ATCC 25618 / H37Rv), this protein is Endonuclease NucS.